A 240-amino-acid polypeptide reads, in one-letter code: Lipoprotein-releasing system ATP-binding protein LolD (240 aa).

Positions 15–240 (IRAESLGKTY…GLRELTSAEV (226 aa)) constitute an ABC transporter domain. 51–58 (GASGAGKS) lines the ATP pocket.

It belongs to the ABC transporter superfamily. Lipoprotein translocase (TC 3.A.1.125) family. As to quaternary structure, the complex is composed of two ATP-binding proteins (LolD) and two transmembrane proteins (LolC and LolE).

It is found in the cell inner membrane. Part of the ABC transporter complex LolCDE involved in the translocation of mature outer membrane-directed lipoproteins, from the inner membrane to the periplasmic chaperone, LolA. Responsible for the formation of the LolA-lipoprotein complex in an ATP-dependent manner. This is Lipoprotein-releasing system ATP-binding protein LolD from Xylella fastidiosa (strain Temecula1 / ATCC 700964).